A 493-amino-acid polypeptide reads, in one-letter code: Glutamyl-tRNA(Gln) amidotransferase subunit A (493 aa).

Residues lysine 78 and serine 158 each act as charge relay system in the active site. The active-site Acyl-ester intermediate is the serine 182.

Belongs to the amidase family. GatA subfamily. Heterotrimer of A, B and C subunits.

It catalyses the reaction L-glutamyl-tRNA(Gln) + L-glutamine + ATP + H2O = L-glutaminyl-tRNA(Gln) + L-glutamate + ADP + phosphate + H(+). Functionally, allows the formation of correctly charged Gln-tRNA(Gln) through the transamidation of misacylated Glu-tRNA(Gln) in organisms which lack glutaminyl-tRNA synthetase. The reaction takes place in the presence of glutamine and ATP through an activated gamma-phospho-Glu-tRNA(Gln). The protein is Glutamyl-tRNA(Gln) amidotransferase subunit A of Rickettsia canadensis (strain McKiel).